A 972-amino-acid polypeptide reads, in one-letter code: Nuclear factor NF-kappa-B p105 subunit (972 aa).

Residues 39–246 enclose the RHD domain; sequence ADGPYLQILE…DAIYDSKAPN (208 aa). An S-nitrosocysteine; alternate modification is found at cysteine 61. A lipid anchor (S-(15-deoxy-Delta12,14-prostaglandin J2-9-yl)cysteine; alternate) is attached at cysteine 61. Lysine 325 participates in a covalent cross-link: Glycyl lysine isopeptide (Lys-Gly) (interchain with G-Cter in SUMO2). Serine 337 is subject to Phosphoserine; by PKA. The Nuclear localization signal signature appears at 360-365; sequence QRKRQK. The GRR stretch occupies residues 372-394; that stretch reads DSFGGGSGAGAGGGGMFGSGGGG. A disordered region spans residues 425–473; the sequence is KSNAGMKHGTIDTPSKNDSEGCGKNVDREAVNLSGKVTEPTEQDKESSM. N6-acetyllysine; by EP300 is present on residues lysine 431 and lysine 440. The interaction with CFLAR stretch occupies residues 435–972; sequence IDTPSKNDSE…GQEGPIEGKI (538 aa). Positions 439-454 are enriched in basic and acidic residues; it reads SKNDSEGCGKNVDREA. ANK repeat units lie at residues 539–568, 578–607, 611–640, 647–676, 681–711, and 715–744; these read NGDS…GLIS, LYQT…DLSL, LGNS…AALL, EGLN…DVNA, SGRT…HVDS, and DGTT…DPLV. Positions 647–681 are essential for interaction with HIF1AN; the sequence is EGLNAIHIAVMSNSMPCLLLLVAAGADVNAQERKS. Asparagine 675 bears the (3S)-3-hydroxyasparagine; by HIF1AN mark. Residue serine 756 is modified to Phosphoserine. Residues 768 to 798 form an ANK 7 repeat; sequence PGTTPLDMATNWQVFDILNGKPYEPEFTSDD. Residues 814–889 enclose the Death domain; it reads LQLYKLLEIP…EAIEVIQAAF (76 aa). Positions 894–926 are disordered; it reads TAAPSPGKGAPQTLSLPLSSASTRSPVDEVRDD. The segment covering 905–918 has biased composition (polar residues); sequence QTLSLPLSSASTRS. Phosphoserine; by GSK3-beta; in vitro occurs at positions 908 and 912. Position 927 is a phosphoserine (serine 927). A phosphoserine; by IKKB mark is found at serine 931 and serine 936. Serine 941 carries the phosphoserine modification. The residue at position 947 (threonine 947) is a Phosphothreonine.

Component of the NF-kappa-B p65-p50 complex. Homodimer; component of the NF-kappa-B p50-p50 complex. Component of the NF-kappa-B p105-p50 complex. Component of the NF-kappa-B p50-c-Rel complex. Component of a complex consisting of the NF-kappa-B p50-p50 homodimer and BCL3. Also interacts with MAP3K8. NF-kappa-B p50 subunit interacts with NCOA3 coactivator, which may coactivate NF-kappa-B dependent expression via its histone acetyltransferase activity. Interacts with TSC22D3; this interaction prevents nuclear translocation and DNA-binding. Interacts with SPAG9 and UNC5CL. NFKB1/p105 interacts with CFLAR; the interaction inhibits p105 processing into p50. NFKB1/p105 forms a ternary complex with MAP3K8 and TNIP2. Interacts with GSK3B; the interaction prevents processing of p105 to p50. NFKB1/p50 interacts with NFKBIE. NFKB1/p50 interacts with NFKBIZ. Nuclear factor NF-kappa-B p50 subunit interacts with NFKBID. Directly interacts with MEN1. Interacts with HIF1AN. Interacts with FEM1A; interaction is direct. Generation of the NF-kappa-B p50 (Nuclear factor NF-kappa-B p50 subunit) transcription factor takes place both cotranslationally and post-translationally via non-mutually exclusive mechanisms. A cotranslational processing allows the production of both p50 and p105 (Nuclear factor NF-kappa-B p105 subunit) from a single NFKB1 mRNA. While translation occurs, the particular unfolded structure after the GRR repeat region acts as a substrate for the proteasome, promoting degradation of the C-terminus. The GRR acts as a proteasomal 'stop signal', protecting the region upstream of the GRR from degradation and promoting generation of p50. It is unclear if limited proteasome degradation during cotranslational processing depends on ubiquitination. NF-kappa-B p50 is also generated post-translationally following ubiquitination by the KPC complex, leading to limited processing by the proteasome downstream of the GRR region, thereby generating p50. Post-translationally, phosphorylation at the C-terminus by IKBKB/IKKB acts as a signal for ubiquitination and promotes either complete degradation or processing to generate the NF-kappa-B p50 (Nuclear factor NF-kappa-B p50 subunit). Phosphorylation at Ser-908 and Ser-912 primes p105 for proteolytic processing in response to TNF-alpha stimulation. Phosphorylation at Ser-927, Ser-931 and Ser-936 are required for BTRC/BTRCP-mediated ubiquitination and proteolysis. Phosphorylation at Ser-931 is also required for ubiquitination by the KPC complex and limited processing to generate NF-kappa-B p50 (Nuclear factor NF-kappa-B p50 subunit). In terms of processing, polyubiquitinated at multiple Lys residues in the C-terminus. Polyubiquitinated by the SCF(FBXW11) and SCF(BTRC) complexes following phosphorylation at Ser-923, Ser-927, Ser-931 and Ser-936, leading to its complete degradation. In contrast, polyubiquitination by the KPC complex following phosphorylation at Ser-931 leads to limited proteosomal processing and generation of the active NF-kappa-B p50 (Nuclear factor NF-kappa-B p50 subunit). S-nitrosylation of Cys-61 affects DNA binding. Post-translationally, the covalent modification of cysteine by 15-deoxy-Delta12,14-prostaglandin-J2 is autocatalytic and reversible. It may occur as an alternative to other cysteine modifications, such as S-nitrosylation and S-palmitoylation.

The protein localises to the cytoplasm. Its subcellular location is the nucleus. In terms of biological role, NF-kappa-B is a pleiotropic transcription factor present in almost all cell types and is the endpoint of a series of signal transduction events that are initiated by a vast array of stimuli related to many biological processes such as inflammation, immunity, differentiation, cell growth, tumorigenesis and apoptosis. NF-kappa-B is a homo- or heterodimeric complex formed by the Rel-like domain-containing proteins RELA/p65, RELB, NFKB1/p105, NFKB1/p50, REL and NFKB2/p52 and the heterodimeric p65-p50 complex appears to be most abundant one. The dimers bind at kappa-B sites in the DNA of their target genes and the individual dimers have distinct preferences for different kappa-B sites that they can bind with distinguishable affinity and specificity. Different dimer combinations act as transcriptional activators or repressors, respectively. NF-kappa-B is controlled by various mechanisms of post-translational modification and subcellular compartmentalization as well as by interactions with other cofactors or corepressors. NF-kappa-B complexes are held in the cytoplasm in an inactive state complexed with members of the NF-kappa-B inhibitor (I-kappa-B) family. In a conventional activation pathway, I-kappa-B is phosphorylated by I-kappa-B kinases (IKKs) in response to different activators, subsequently degraded thus liberating the active NF-kappa-B complex which translocates to the nucleus. NF-kappa-B heterodimeric p65-p50 and RelB-p50 complexes are transcriptional activators. The NF-kappa-B p50-p50 homodimer is a transcriptional repressor, but can act as a transcriptional activator when associated with BCL3. NFKB1 appears to have dual functions such as cytoplasmic retention of attached NF-kappa-B proteins by p105 and generation of p50 by a cotranslational processing. The proteasome-mediated process ensures the production of both p50 and p105 and preserves their independent function, although processing of NFKB1/p105 also appears to occur post-translationally. p50 binds to the kappa-B consensus sequence 5'-GGRNNYYCC-3', located in the enhancer region of genes involved in immune response and acute phase reactions. In a complex with MAP3K8, NFKB1/p105 represses MAP3K8-induced MAPK signaling; active MAP3K8 is released by proteasome-dependent degradation of NFKB1/p105. P105 is the precursor of the active p50 subunit (Nuclear factor NF-kappa-B p50 subunit) of the nuclear factor NF-kappa-B. Acts as a cytoplasmic retention of attached NF-kappa-B proteins by p105. Its function is as follows. Constitutes the active form, which associates with RELA/p65 to form the NF-kappa-B p65-p50 complex to form a transcription factor. Together with RELA/p65, binds to the kappa-B consensus sequence 5'-GGRNNYYCC-3', located in the enhancer region of genes involved in immune response and acute phase reactions. The polypeptide is Nuclear factor NF-kappa-B p105 subunit (NFKB1) (Canis lupus familiaris (Dog)).